The primary structure comprises 260 residues: MLIEDENIRYGGAQADVEDDAARKAQERELKKAEVRKRMEEAAKKGSKKKGFLTPERKKKLRKLLMMKAAEDLKQQQMLKEQERQKTLQQRTIPLPDVDSINDQGQLLKIYEDMFARVCALEEEKFDINFGVSQTEAEINQLTIQVNDLRGKFVKPTLKKVSKYDNKFKSSGEVKEKSNFRNNLKVVKKETDLDEIMAKKKGTADGKPEWSKKEKKEEEAAPVELAAPVEPEAEPEPEAAEPAAEEPEAEEEEEEEEEEE.

Basic and acidic residues predominate over residues aspartate 192–glutamate 219. The segment at aspartate 192 to glutamate 260 is disordered. The span at proline 231 to glutamate 260 shows a compositional bias: acidic residues.

Belongs to the troponin I family. As to expression, expressed in body wall muscle from first larval stage to adult. In adults expression is predominantly in vulval and anal muscles, body wall muscle expression is weaker. Also expressed in vulval muscles of hermaphrodites and the sex muscles of males.

Its function is as follows. Troponin I is the inhibitory subunit of troponin, the thin filament regulatory complex which confers calcium-sensitivity to muscle actomyosin ATPase activity. In Caenorhabditis elegans, this protein is Troponin I 3 (tni-3).